A 542-amino-acid chain; its full sequence is CTP synthase (542 aa).

An amidoligase domain region spans residues 1-265; that stretch reads MARYVFITGG…DDEVLAAFGI (265 aa). A CTP-binding site is contributed by serine 13. Serine 13 contacts UTP. Residues 14–19 and aspartate 71 each bind ATP; that span reads SLGKGI. The Mg(2+) site is built by aspartate 71 and glutamate 139. CTP is bound by residues 146–148, 186–191, and lysine 222; these read DIE and KTKPTQ. UTP is bound by residues 186–191 and lysine 222; that span reads KTKPTQ. The Glutamine amidotransferase type-1 domain occupies 291 to 541; the sequence is TIAIVGKYTG…IEAATEQSRL (251 aa). Position 353 (glycine 353) interacts with L-glutamine. Residue cysteine 380 is the Nucleophile; for glutamine hydrolysis of the active site. Residues 381–384, glutamate 404, and arginine 469 each bind L-glutamine; that span reads FGMQ. Residues histidine 514 and glutamate 516 contribute to the active site.

Belongs to the CTP synthase family. Homotetramer.

The enzyme catalyses UTP + L-glutamine + ATP + H2O = CTP + L-glutamate + ADP + phosphate + 2 H(+). It catalyses the reaction L-glutamine + H2O = L-glutamate + NH4(+). It carries out the reaction UTP + NH4(+) + ATP = CTP + ADP + phosphate + 2 H(+). It participates in pyrimidine metabolism; CTP biosynthesis via de novo pathway; CTP from UDP: step 2/2. Its activity is regulated as follows. Allosterically activated by GTP, when glutamine is the substrate; GTP has no effect on the reaction when ammonia is the substrate. The allosteric effector GTP functions by stabilizing the protein conformation that binds the tetrahedral intermediate(s) formed during glutamine hydrolysis. Inhibited by the product CTP, via allosteric rather than competitive inhibition. Its function is as follows. Catalyzes the ATP-dependent amination of UTP to CTP with either L-glutamine or ammonia as the source of nitrogen. Regulates intracellular CTP levels through interactions with the four ribonucleotide triphosphates. The protein is CTP synthase of Rhizobium johnstonii (strain DSM 114642 / LMG 32736 / 3841) (Rhizobium leguminosarum bv. viciae).